A 301-amino-acid polypeptide reads, in one-letter code: 2-methylisocitrate lyase (301 aa).

53–55 provides a ligand contact to substrate; the sequence is SGA. Residues aspartate 92 and aspartate 94 each contribute to the Mg(2+) site. Substrate is bound by residues 129–130, arginine 162, glutamate 192, 214–216, arginine 245, and arginine 274; these read CG and NMT.

Belongs to the isocitrate lyase/PEP mutase superfamily. Methylisocitrate lyase family. The cofactor is Mg(2+).

It catalyses the reaction 3-hydroxybutane-1,2,3-tricarboxylate = pyruvate + succinate. Involved in the methylcitric acid cycle. Catalyzes the cleavage of 2-methylisocitrate to yield pyruvate and succinate. This is 2-methylisocitrate lyase from Bacillus subtilis (strain 168).